The following is a 497-amino-acid chain: Glycerol kinase (497 aa).

Residue T11 participates in ADP binding. 3 residues coordinate ATP: T11, T12, and S13. Sn-glycerol 3-phosphate is bound at residue T11. Residue R15 coordinates ADP. Sn-glycerol 3-phosphate is bound by residues R81, E82, Y134, and D244. Positions 81, 82, 134, 244, and 245 each coordinate glycerol. ADP-binding residues include T266 and G309. ATP is bound by residues T266, G309, Q313, and G410. ADP is bound by residues G410 and N414.

The protein belongs to the FGGY kinase family.

The enzyme catalyses glycerol + ATP = sn-glycerol 3-phosphate + ADP + H(+). The protein operates within polyol metabolism; glycerol degradation via glycerol kinase pathway; sn-glycerol 3-phosphate from glycerol: step 1/1. Inhibited by fructose 1,6-bisphosphate (FBP). In terms of biological role, key enzyme in the regulation of glycerol uptake and metabolism. Catalyzes the phosphorylation of glycerol to yield sn-glycerol 3-phosphate. The chain is Glycerol kinase from Fusobacterium nucleatum subsp. nucleatum (strain ATCC 25586 / DSM 15643 / BCRC 10681 / CIP 101130 / JCM 8532 / KCTC 2640 / LMG 13131 / VPI 4355).